The sequence spans 206 residues: Large ribosomal subunit protein uL4 (206 aa).

This sequence belongs to the universal ribosomal protein uL4 family. As to quaternary structure, part of the 50S ribosomal subunit.

One of the primary rRNA binding proteins, this protein initially binds near the 5'-end of the 23S rRNA. It is important during the early stages of 50S assembly. It makes multiple contacts with different domains of the 23S rRNA in the assembled 50S subunit and ribosome. Its function is as follows. Forms part of the polypeptide exit tunnel. The sequence is that of Large ribosomal subunit protein uL4 from Paracoccus denitrificans (strain Pd 1222).